The sequence spans 250 residues: 3-deoxy-manno-octulosonate cytidylyltransferase (250 aa).

Belongs to the KdsB family.

It localises to the cytoplasm. It carries out the reaction 3-deoxy-alpha-D-manno-oct-2-ulosonate + CTP = CMP-3-deoxy-beta-D-manno-octulosonate + diphosphate. The protein operates within nucleotide-sugar biosynthesis; CMP-3-deoxy-D-manno-octulosonate biosynthesis; CMP-3-deoxy-D-manno-octulosonate from 3-deoxy-D-manno-octulosonate and CTP: step 1/1. It functions in the pathway bacterial outer membrane biogenesis; lipopolysaccharide biosynthesis. In terms of biological role, activates KDO (a required 8-carbon sugar) for incorporation into bacterial lipopolysaccharide in Gram-negative bacteria. The chain is 3-deoxy-manno-octulosonate cytidylyltransferase from Cytophaga hutchinsonii (strain ATCC 33406 / DSM 1761 / CIP 103989 / NBRC 15051 / NCIMB 9469 / D465).